The following is a 1070-amino-acid chain: Duffy receptor (1070 aa).

The N-terminal stretch at 1–20 is a signal peptide; the sequence is MKGKNRSLFVLLVLLLLHKV. The Extracellular segment spans residues 21 to 1007; the sequence is NNVLLERTIE…CFTKGGFKDK (987 aa). Residues 116–146 are disordered; the sequence is YMEGKDGGDKTGEEKDGEHKTDSKTDNGKGA. Residues 118-142 show a composition bias toward basic and acidic residues; the sequence is EGKDGGDKTGEEKDGEHKTDSKTDN. A glycan (N-linked (GlcNAc...) asparagine) is linked at asparagine 183. The tract at residues 211–521 is pvRII region; mediates ACKR1 binding; it reads NTVMKNCNYK…AKKNTQEVVT (311 aa). 2 cysteine pairs are disulfide-bonded: cysteine 217/cysteine 246 and cysteine 230/cysteine 237. Residues asparagine 255, asparagine 351, and asparagine 420 are each glycosylated (N-linked (GlcNAc...) asparagine). 4 disulfide bridges follow: cysteine 300-cysteine 377, cysteine 415-cysteine 432, cysteine 427-cysteine 507, and cysteine 436-cysteine 505. 3 stretches are compositionally biased toward polar residues: residues 525–542, 554–569, and 629–642; these read NAAK…QPVD, THGN…TTGK, and GASN…TVEA. Residues 525–906 are disordered; it reads NAAKSQATNS…HLNSNNNLSN (382 aa). Residues 697–711 show a composition bias toward basic and acidic residues; sequence ETGKGQDNDMAKATK. Residues 712 to 728 show a composition bias toward low complexity; the sequence is DSSNSSDGTSSATGDTT. N-linked (GlcNAc...) asparagine glycosylation is present at asparagine 715. The segment covering 730–748 has biased composition (basic and acidic residues); it reads AVDREINKGVPEDRDKTVG. N-linked (GlcNAc...) asparagine glycosylation is present at asparagine 787. The span at 808–817 shows a compositional bias: low complexity; it reads LSKTESLEST. N-linked (GlcNAc...) asparagine glycosylation is present at asparagine 825. Composition is skewed to basic and acidic residues over residues 835–849 and 865–889; these read NGGK…DFKS and AEGH…KDTF. The segment covering 895-906 has biased composition (low complexity); it reads SHHLNSNNNLSN. N-linked (GlcNAc...) asparagine glycans are attached at residues asparagine 903 and asparagine 938. Residues 1008 to 1025 traverse the membrane as a helical segment; sequence TYFAAAGALLILLLLIAS. The Cytoplasmic portion of the chain corresponds to 1026–1070; it reads RKMIKNDSEEATFNEFEEYCDNIHRIPLMPNNIEHMQPSTPLDYS.

In terms of assembly, homodimer; dimerization (via PvRII region) is promoted by the interaction with human ACKR1. Interacts (via PvRII region) with human ACKR1 (via N-terminal extracellular domain).

It is found in the membrane. Binds to the human erythrocyte Duffy blood group determinant (ACKR1). In Plasmodium vivax (strain Salvador I), this protein is Duffy receptor (PVDR).